The chain runs to 242 residues: Glucosamine-6-phosphate deaminase (242 aa).

The active-site Proton acceptor; for enolization step is the Asp67. Residue Asn136 is the For ring-opening step of the active site. His138 serves as the catalytic Proton acceptor; for ring-opening step. Glu143 (for ring-opening step) is an active-site residue.

This sequence belongs to the glucosamine/galactosamine-6-phosphate isomerase family. NagB subfamily.

It carries out the reaction alpha-D-glucosamine 6-phosphate + H2O = beta-D-fructose 6-phosphate + NH4(+). It participates in amino-sugar metabolism; N-acetylneuraminate degradation; D-fructose 6-phosphate from N-acetylneuraminate: step 5/5. Functionally, catalyzes the reversible isomerization-deamination of glucosamine 6-phosphate (GlcN6P) to form fructose 6-phosphate (Fru6P) and ammonium ion. The protein is Glucosamine-6-phosphate deaminase of Clostridium perfringens (strain 13 / Type A).